The following is a 192-amino-acid chain: Small ribosomal subunit protein uS5 (192 aa).

In terms of domain architecture, S5 DRBM spans 20–83; sequence FVDKLVHINR…EAAKRGLIRV (64 aa). The interval 162–192 is disordered; sequence SVAARRGLKVSALQARRRDADPADTSEAAVA.

The protein belongs to the universal ribosomal protein uS5 family. Part of the 30S ribosomal subunit. Contacts proteins S4 and S8.

With S4 and S12 plays an important role in translational accuracy. Functionally, located at the back of the 30S subunit body where it stabilizes the conformation of the head with respect to the body. The polypeptide is Small ribosomal subunit protein uS5 (Methylorubrum extorquens (strain CM4 / NCIMB 13688) (Methylobacterium extorquens)).